The primary structure comprises 129 residues: Histone H2A.J (129 aa).

The disordered stretch occupies residues 1–22; that stretch reads MSGRGKQGGKVRAKAKSRSSRA. Lys-6 and Lys-10 each carry N6-acetyllysine. Residues 7–19 are compositionally biased toward basic residues; sequence QGGKVRAKAKSRS. An N6-lactoyllysine; alternate modification is found at Lys-10. Position 105 is an N5-methylglutamine (Gln-105). Thr-121 bears the Phosphothreonine; by DCAF1 mark.

The protein belongs to the histone H2A family. As to quaternary structure, the nucleosome is a histone octamer containing two molecules each of H2A, H2B, H3 and H4 assembled in one H3-H4 heterotetramer and two H2A-H2B heterodimers. The octamer wraps approximately 147 bp of DNA. Monoubiquitination of Lys-120 (H2AXK119ub) gives a specific tag for epigenetic transcriptional repression. Following DNA double-strand breaks (DSBs), it is ubiquitinated through 'Lys-63' linkage of ubiquitin moieties. In terms of processing, glutamine methylation at Gln-105 (H2AQ104me) by FBL is specifically dedicated to polymerase I. It is present at 35S ribosomal DNA locus and impairs binding of the FACT complex. Post-translationally, phosphorylation on Ser-2 (H2AS1ph) is enhanced during mitosis. Phosphorylation on Ser-2 by RPS6KA5/MSK1 directly represses transcription. Acetylation of H3 inhibits Ser-2 phosphorylation by RPS6KA5/MSK1. Phosphorylation at Thr-121 (H2AT120ph) by DCAF1 is present in the regulatory region of many tumor suppresor genes and down-regulates their transcription.

The protein localises to the nucleus. It is found in the chromosome. Core component of nucleosome. Nucleosomes wrap and compact DNA into chromatin, limiting DNA accessibility to the cellular machineries which require DNA as a template. Histones thereby play a central role in transcription regulation, DNA repair, DNA replication and chromosomal stability. DNA accessibility is regulated via a complex set of post-translational modifications of histones, also called histone code, and nucleosome remodeling. This chain is Histone H2A.J, found in Mus musculus (Mouse).